The sequence spans 2500 residues: Non-reducing polyketide synthase atr1 (2500 aa).

Positions 13 to 260 are N-terminal acylcarrier protein transacylase domain (SAT); sequence VFSPQSKAPK…HNPENANLAL (248 aa). One can recognise a Ketosynthase family 3 (KS3) domain in the interval 385–808; the sequence is TDAVAVVGMA…GSNSAVLLCQ (424 aa). Catalysis depends on for beta-ketoacyl synthase activity residues C557, H692, and H731. The tract at residues 908–1199 is malonyl-CoA:ACP transacylase (MAT) domain; it reads MTFSGQSRQS…EFPERHTFLD (292 aa). Catalysis depends on S995, which acts as the For acyl/malonyl transferase activity. Positions 1286–1413 are N-terminal hotdog fold; the sequence is PRLVEPRTKP…GDFGFTTQTQ (128 aa). The PKS/mFAS DH domain occupies 1286-1584; sequence PRLVEPRTKP…FTKLPITRLE (299 aa). A product template (PT) domain region spans residues 1287-1583; that stretch reads RLVEPRTKPS…QFTKLPITRL (297 aa). Catalysis depends on H1317, which acts as the Proton acceptor; for dehydratase activity. The tract at residues 1433 to 1584 is C-terminal hotdog fold; it reads SETLKSKRAY…FTKLPITRLE (152 aa). The Proton donor; for dehydratase activity role is filled by D1495. The disordered stretch occupies residues 1594–1649; that stretch reads AHNTPILKSSQQDSIVSASSSSSTEHSDDDSEDDGSRSPSHSDTSVDSESEAPADN. Positions 1602–1617 are enriched in low complexity; sequence SSQQDSIVSASSSSST. The Carrier domain occupies 1649 to 1725; sequence NGAAKKLKSL…RIVAPEMAAK (77 aa). Residue S1683 is modified to O-(pantetheine 4'-phosphoryl)serine. Residues 2164 to 2496 form a thioesterase (TE) domain region; it reads KSYRIETMPY…YEFIFDVVGR (333 aa). Active-site for thioesterase activity residues include S2285 and D2434.

The catalysed reaction is 6 malonyl-CoA + 2 acetyl-CoA + 2 S-adenosyl-L-methionine + 3 H(+) = 4-O-demethylbarbatate + 2 S-adenosyl-L-homocysteine + 6 CO2 + 8 CoA + H2O. Its pathway is secondary metabolite biosynthesis; terpenoid biosynthesis. In terms of biological role, non-reducing polyketide synthase; part of the gene cluster that mediates the biosynthesis of atranorin, a depside of polyketide origin that accumulates in the cortical or medullary layers of lichen thalli. The first step in the pathway is performed by the non-reducing polyketide synthase atr1 that produces 4-O-demethylbarbatic acid composed of two 3-methylorsellinic acid (3MOA) moieties from S-adenosyl-L-methionine (SAM), acetyl-CoA and malonyl-CoA units. The pathway continues with the actions of the cytochrome P450 monooygenase atr2 that catalizes the oxidation of c-9 and the O-methyltransferase atr3 that performs the methylation of the carboxyl group to yield atranorin, via the proatranorin II and III intermediates if atr2 acts first, or the proatranorin I intermediate if atr3 acts first. The protein is Non-reducing polyketide synthase atr1 of Stereocaulon alpinum (Alpine snow lichen).